Reading from the N-terminus, the 533-residue chain is Suppressor of cytokine signaling 6 (533 aa).

Disordered stretches follow at residues 54–136 (CDIG…WPLR) and 177–199 (ELRD…PGDL). Positions 59 to 69 (EDEKGKNRSKS) are enriched in basic and acidic residues. The span at 76-88 (LKRRLSAKQKTKG) shows a compositional bias: basic residues. A compositionally biased stretch (basic and acidic residues) spans 177–189 (ELRDLQPEPRPES). The region spanning 382–489 (WYWGPITRWE…TYPVRLTNPV (108 aa)) is the SH2 domain. Positions 484–533 (RLTNPVSRFMQVRSLQYLCRFVIRQYTRIDLIQKLPLPNKMKDYLQEKHY) constitute an SOCS box domain.

Interacts with KIT (phosphorylated). Interacts with RBCK1. Interacts with phosphorylated IRS4. Interacts with PIM3.

It functions in the pathway protein modification; protein ubiquitination. SOCS family proteins form part of a classical negative feedback system that regulates cytokine signal transduction. May be a substrate recognition component of a SCF-like ECS (Elongin BC-CUL2/5-SOCS-box protein) E3 ubiquitin-protein ligase complex which mediates the ubiquitination and subsequent proteasomal degradation of target proteins. Regulates KIT degradation by ubiquitination of the tyrosine-phosphorylated receptor. This Mus musculus (Mouse) protein is Suppressor of cytokine signaling 6 (Socs6).